Here is a 498-residue protein sequence, read N- to C-terminus: Putative antiporter subunit mnhD2 (498 aa).

14 helical membrane passes run 2–22, 32–52, 78–98, 108–128, 130–150, 161–181, 209–229, 240–260, 271–291, 308–328, 330–350, 369–389, 406–426, and 451–471; these read LSNL…ILVF, YLYL…LIYV, LSLI…AYGF, YHLP…FLTS, LFNL…LITL, IIYV…IGLL, ISLI…FMWL, LAAL…IRFF, IHPL…IGVI, IGFI…GAIF, LVND…LVYI, FGVA…FSGF, IGLA…FRIF, and ILSI…VVLN.

This sequence belongs to the CPA3 antiporters (TC 2.A.63) subunit D family. May form a heterooligomeric complex that consists of seven subunits: mnhA2, mnhB2, mnhC2, mnhD2, mnhE2, mnhF2 and mnhG2.

Its subcellular location is the cell membrane. The sequence is that of Putative antiporter subunit mnhD2 (mnhD2) from Staphylococcus aureus (strain Mu3 / ATCC 700698).